The following is a 220-amino-acid chain: Large ribosomal subunit protein uL3 (220 aa).

Residues 113-143 are disordered; the sequence is GTTKGHGYQGNIHKDGQRRGPMAHGSRYHRR.

It belongs to the universal ribosomal protein uL3 family. Part of the 50S ribosomal subunit. Forms a cluster with proteins L14 and L19.

Functionally, one of the primary rRNA binding proteins, it binds directly near the 3'-end of the 23S rRNA, where it nucleates assembly of the 50S subunit. The polypeptide is Large ribosomal subunit protein uL3 (Limosilactobacillus fermentum (strain NBRC 3956 / LMG 18251) (Lactobacillus fermentum)).